The chain runs to 678 residues: Electrogenic aspartate/glutamate antiporter SLC25A12, mitochondrial (678 aa).

Alanine 2 bears the N-acetylalanine mark. The tract at residues 2–294 (AVKVQTTKRG…TLADIERIAP (293 aa)) is regulatory N-terminal domain. The Mitochondrial intermembrane portion of the chain corresponds to 2 to 329 (AVKVQTTKRG…WLQIAESAYR (328 aa)). Ca(2+)-binding residues include aspartate 65, threonine 67, aspartate 69, leucine 71, and glutamate 76. EF-hand domains are found at residues 65–76 (DQTKDGLISYQE), 86–121 (APDS…TIIH), 125–155 (PFNW…QFLQ), and 157–192 (LQLE…IRSH). Residues 295-310 (LAEGALPYNLAELQRQ) are linker loop domain. Residues 320-612 (WLQIAESAYR…RWFYIDFGGL (293 aa)) are carrier domain. Solcar repeat units follow at residues 324 to 416 (AESA…VRDK), 424 to 508 (VPLP…CKLL), and 516 to 604 (VGGL…LQRW). Residues 330–347 (FTLGSVAGAVGATAVYPI) traverse the membrane as a helical segment. Residues 348 to 390 (DLVKTRMQNQRGSGSVVGELMYKNSFDCFKKVLRYEGFFGLYR) lie on the Mitochondrial matrix side of the membrane. Residues 391–410 (GLIPQLIGVAPEKAIKLTVN) traverse the membrane as a helical segment. Topologically, residues 411-433 (DFVRDKFTRRDGSVPLPAEVLAG) are mitochondrial intermembrane. The chain crosses the membrane as a helical span at residues 434–447 (GCAGGSQVIFTNPL). Over 448 to 482 (EIVKIRLQVAGEITTGPRVSALNVLRDLGIFGLYK) the chain is Mitochondrial matrix. Residues 483 to 502 (GAKACFLRDIPFSAIYFPVY) form a helical membrane-spanning segment. Residues 503 to 521 (AHCKLLLADENGHVGGLNL) are Mitochondrial intermembrane-facing. A helical transmembrane segment spans residues 522–539 (LAAGAMAGVPAASLVTPA). At 540 to 578 (DVIKTRLQVAARAGQTTYSGVIDCFRKILREEGPSAFWK) the chain is on the mitochondrial matrix side. Residues 579-598 (GTAARVFRSSPQFGVTLVTY) traverse the membrane as a helical segment. The Mitochondrial intermembrane segment spans residues 599 to 678 (ELLQRWFYID…QPKAAVAATQ (80 aa)). The tract at residues 613–675 (KPAGSEPTPK…AVVQPKAAVA (63 aa)) is C-terminal domain.

This sequence belongs to the mitochondrial carrier (TC 2.A.29) family. In terms of assembly, homodimer (via N-terminus). Expressed predominantly in the heart and skeletal muscle, weakly in brain and kidney.

It localises to the mitochondrion inner membrane. It carries out the reaction L-aspartate(in) + L-glutamate(out) + H(+)(out) = L-aspartate(out) + L-glutamate(in) + H(+)(in). The catalysed reaction is 3-sulfino-L-alanine(out) + L-glutamate(in) + H(+)(in) = 3-sulfino-L-alanine(in) + L-glutamate(out) + H(+)(out). It catalyses the reaction 3-sulfino-L-alanine(out) + L-aspartate(in) = 3-sulfino-L-alanine(in) + L-aspartate(out). Its activity is regulated as follows. Activated by calcium-binding in the mitochondrial intermembrane space. Inhibited by pyridoxal 5'-phosphate, bathophenathroline, mercurials, diethyl pyrocarbonate and N-ethylmaleimide. In terms of biological role, mitochondrial electrogenic aspartate/glutamate antiporter that favors efflux of aspartate and entry of glutamate and proton within the mitochondria as part of the malate-aspartate shuttle. Also mediates the uptake of L-cysteinesulfinate (3-sulfino-L-alanine) by mitochondria in exchange of L-glutamate and proton. Can also exchange L-cysteinesulfinate with aspartate in their anionic form without any proton translocation. Lacks transport activity towards L-glutamine or gamma-aminobutyric acid (GABA). The polypeptide is Electrogenic aspartate/glutamate antiporter SLC25A12, mitochondrial (Homo sapiens (Human)).